A 477-amino-acid polypeptide reads, in one-letter code: Bifunctional protein HldE (477 aa).

The segment at 1 to 318 is ribokinase; the sequence is MKVTLPEFER…ENAVRGRAET (318 aa). Residue 195–198 coordinates ATP; the sequence is NLSE. Residue aspartate 264 is part of the active site. Residues 344-477 are cytidylyltransferase; the sequence is MTNGVFDILH…IKKIQKDSDK (134 aa).

The protein in the N-terminal section; belongs to the carbohydrate kinase PfkB family. This sequence in the C-terminal section; belongs to the cytidylyltransferase family. As to quaternary structure, homodimer.

The catalysed reaction is D-glycero-beta-D-manno-heptose 7-phosphate + ATP = D-glycero-beta-D-manno-heptose 1,7-bisphosphate + ADP + H(+). It carries out the reaction D-glycero-beta-D-manno-heptose 1-phosphate + ATP + H(+) = ADP-D-glycero-beta-D-manno-heptose + diphosphate. It participates in nucleotide-sugar biosynthesis; ADP-L-glycero-beta-D-manno-heptose biosynthesis; ADP-L-glycero-beta-D-manno-heptose from D-glycero-beta-D-manno-heptose 7-phosphate: step 1/4. The protein operates within nucleotide-sugar biosynthesis; ADP-L-glycero-beta-D-manno-heptose biosynthesis; ADP-L-glycero-beta-D-manno-heptose from D-glycero-beta-D-manno-heptose 7-phosphate: step 3/4. Its function is as follows. Catalyzes the phosphorylation of D-glycero-D-manno-heptose 7-phosphate at the C-1 position to selectively form D-glycero-beta-D-manno-heptose-1,7-bisphosphate. In terms of biological role, catalyzes the ADP transfer from ATP to D-glycero-beta-D-manno-heptose 1-phosphate, yielding ADP-D-glycero-beta-D-manno-heptose. The sequence is that of Bifunctional protein HldE from Klebsiella pneumoniae (strain 342).